The primary structure comprises 248 residues: Positive alginate biosynthesis regulatory protein (248 aa).

The Response regulatory domain occupies 2–117 (NVLIVDDEPL…DLAEALKKAS (116 aa)). At aspartate 54 the chain carries 4-aspartylphosphate. The HTH LytTR-type domain maps to 142 to 247 (ISARTRKGIE…VAGVRRLMHQ (106 aa)).

It participates in glycan biosynthesis; alginate biosynthesis [regulation]. Functionally, positive regulator of the algD gene, which codes for a GDP-mannose dehydrogenase, a key step enzyme in the alginate biosynthesis pathway. The polypeptide is Positive alginate biosynthesis regulatory protein (algR) (Pseudomonas aeruginosa (strain ATCC 15692 / DSM 22644 / CIP 104116 / JCM 14847 / LMG 12228 / 1C / PRS 101 / PAO1)).